Here is a 446-residue protein sequence, read N- to C-terminus: Methylenetetrahydrofolate--tRNA-(uracil-5-)-methyltransferase TrmFO (446 aa).

11-16 (GGGLAG) contacts FAD.

This sequence belongs to the MnmG family. TrmFO subfamily. The cofactor is FAD.

The protein resides in the cytoplasm. It carries out the reaction uridine(54) in tRNA + (6R)-5,10-methylene-5,6,7,8-tetrahydrofolate + NADH + H(+) = 5-methyluridine(54) in tRNA + (6S)-5,6,7,8-tetrahydrofolate + NAD(+). It catalyses the reaction uridine(54) in tRNA + (6R)-5,10-methylene-5,6,7,8-tetrahydrofolate + NADPH + H(+) = 5-methyluridine(54) in tRNA + (6S)-5,6,7,8-tetrahydrofolate + NADP(+). In terms of biological role, catalyzes the folate-dependent formation of 5-methyl-uridine at position 54 (M-5-U54) in all tRNAs. This is Methylenetetrahydrofolate--tRNA-(uracil-5-)-methyltransferase TrmFO from Oleidesulfovibrio alaskensis (strain ATCC BAA-1058 / DSM 17464 / G20) (Desulfovibrio alaskensis).